The primary structure comprises 1012 residues: PHD finger protein 20 (1012 aa).

Tudor domains lie at 4–69 (HPPN…RPLE) and 83–147 (GSSE…GNAR). Residues 142–336 (IVGNARPKET…RSSRLSTNGT (195 aa)) form a disordered region. A compositionally biased stretch (basic and acidic residues) spans 147 to 245 (RPKETDHKSL…QVDKKPENDI (99 aa)). Phosphoserine is present on S159. The a.T hook DNA-binding region spans 257–269 (KRKRGRPPSIAPT). Over residues 271–280 (VDSNSQTLQP) the composition is skewed to polar residues. Positions 297 to 325 (PLKRPRLDKNSSQEKSKNYSENTDKDLSR) are enriched in basic and acidic residues. A C2H2-type zinc finger spans residues 452-477 (FRCKVVDCLKFFRKAKLLHYHMKYFH). The segment covering 481–490 (KSLEPEESPG) has biased composition (basic and acidic residues). The tract at residues 481–611 (KSLEPEESPG…KGKVKALEED (131 aa)) is disordered. A Phosphoserine modification is found at S488. Polar residues predominate over residues 497–509 (RGPSASDKPSQET). Over residues 522–538 (TKDKEKNKEKKFKEFVR) the composition is skewed to basic and acidic residues. The span at 539-551 (VKPKKKKKKKKKT) shows a compositional bias: basic residues. The PHD-type zinc finger occupies 654–700 (RCICEVQEENDFMIQCEECQCWQHGVCMGLLEENVPEKYTCYVCQDP). K843 is subject to N6-acetyllysine. Residues 866 to 912 (DAVNPLHENGDDSLSPRLGWPLDQDRSKGDSDPKPGSPKVKEYVSKK) are disordered. A phosphoserine mark is found at S878 and S880. Over residues 888 to 912 (DQDRSKGDSDPKPGSPKVKEYVSKK) the composition is skewed to basic and acidic residues.

In terms of assembly, homodimer; disulfide-linked. Component of some MLL1/MLL complex, at least composed of the core components KMT2A/MLL1, ASH2L, HCFC1, WDR5 and RBBP5, as well as the facultative components BACC1, CHD8, E2F6, HSP70, INO80C, KANSL1, LAS1L, MAX, MCRS1, MGA, KAT8/MOF, PELP1, PHF20, PRP31, RING2, RUVB1/TIP49A, RUVB2/TIP49B, SENP3, TAF1, TAF4, TAF6, TAF7, TAF9 and TEX10. Component of the NSL complex at least composed of MOF/KAT8, KANSL1, KANSL2, KANSL3, MCRS1, PHF20, OGT1/OGT, WDR5 and HCFC1. Ubiquitinated by TRIM26; leading to proteasomal degradation. Expressed in heart, kidney, liver, lung, pancreas, placenta, spleen and testis. Not expressed in brain, skeletal muscle, colon, ovary, prostate, small intestine and thymus. Expressed in colon and ovary cancer cell lines while it is not expressed in the respective normal tissues.

It is found in the nucleus. Functionally, methyllysine-binding protein, component of the MOF histone acetyltransferase protein complex. Not required for maintaining the global histone H4 'Lys-16' acetylation (H4K16ac) levels or locus specific histone acetylation, but instead works downstream in transcriptional regulation of MOF target genes. As part of the NSL complex it may be involved in acetylation of nucleosomal histone H4 on several lysine residues. Contributes to methyllysine-dependent p53/TP53 stabilization and up-regulation after DNA damage. The protein is PHD finger protein 20 (PHF20) of Homo sapiens (Human).